Consider the following 229-residue polypeptide: 23 kDa piroplasm membrane protein (229 aa).

The signal sequence occupies residues 1-19 (MNKYFKVFFFVLLTHALKS). Residues 20–203 (SLIFGQATLQ…EKEETSKKKY (184 aa)) are Extracellular-facing. The helical transmembrane segment at 204 to 224 (VLMVVVVVVFVVVASLVVFLV) threads the bilayer. The Cytoplasmic segment spans residues 225–229 (KFCLK).

It is found in the membrane. In Theileria annulata, this protein is 23 kDa piroplasm membrane protein.